A 296-amino-acid polypeptide reads, in one-letter code: Prostate androgen-regulated mucin-like protein 1 homolog (296 aa).

The first 20 residues, 1 to 20 (MVCKALITLCIFAAGLRVQG), serve as a signal peptide directing secretion. Residues 21 to 244 (SPTPTLLPVS…EVENALSSGS (224 aa)) lie on the Extracellular side of the membrane. N-linked (GlcNAc...) asparagine glycans are attached at residues asparagine 62, asparagine 96, and asparagine 108. The segment at 73 to 220 (LTSQLPTHPR…SPQDTEPGKV (148 aa)) is disordered. The span at 80-96 (HPREEAVTSPPLKREVN) shows a compositional bias: basic and acidic residues. Residues 97–111 (STDSSPTGFSSNSSG) are compositionally biased toward low complexity. Polar residues predominate over residues 125–145 (SPETSVPATGSQSPTLLFSQG). 2 stretches are compositionally biased toward low complexity: residues 146-175 (PTSA…TVNN) and 195-205 (SHTPTSHVTEP). Asparagine 168 is a glycosylation site (N-linked (GlcNAc...) asparagine). The span at 206–217 (VPKEKSPQDTEP) shows a compositional bias: basic and acidic residues. A helical membrane pass occupies residues 245–265 (IAAITVTVIAVVLLVFGAAAY). Topologically, residues 266 to 296 (LKIRHSSYGRLLDDHDYGSWGNYNNPLYDDS) are cytoplasmic. Serine 284 bears the Phosphoserine mark.

Belongs to the PARM family. Post-translationally, highly N-glycosylated and O-glycosylated. In terms of tissue distribution, expressed in prostate. Detected in other organs at low levels, these include the heart and various tissues of the urogenital tract. Not detected in mammary gland.

The protein localises to the cell membrane. Its subcellular location is the golgi apparatus membrane. It localises to the endosome membrane. Functionally, may regulate TLP1 expression and telomerase activity, thus enabling certain prostatic cells to resist apoptosis. The sequence is that of Prostate androgen-regulated mucin-like protein 1 homolog (Parm1) from Rattus norvegicus (Rat).